The chain runs to 238 residues: Epoxyqueuosine reductase QueH (238 aa).

Cysteine 43, cysteine 44, cysteine 129, and cysteine 132 together coordinate [4Fe-4S] cluster. Cysteine 211 and cysteine 213 are joined by a disulfide.

The protein belongs to the QueH family.

It carries out the reaction epoxyqueuosine(34) in tRNA + AH2 = queuosine(34) in tRNA + A + H2O. It functions in the pathway tRNA modification; tRNA-queuosine biosynthesis. In terms of biological role, catalyzes the conversion of epoxyqueuosine (oQ) to queuosine (Q), which is a hypermodified base found in the wobble positions of tRNA(Asp), tRNA(Asn), tRNA(His) and tRNA(Tyr). The sequence is that of Epoxyqueuosine reductase QueH from Staphylococcus epidermidis (strain ATCC 12228 / FDA PCI 1200).